A 227-amino-acid polypeptide reads, in one-letter code: Cytochrome c oxidase subunit 2 (227 aa).

At Met-1 to Ser-14 the chain is on the mitochondrial intermembrane side. Residues Pro-15 to Thr-45 traverse the membrane as a helical segment. The Mitochondrial matrix segment spans residues Leu-46–Gln-59. The chain crosses the membrane as a helical span at residues Glu-60 to Thr-87. Residues Asp-88–Leu-227 lie on the Mitochondrial intermembrane side of the membrane. Cu cation is bound by residues His-161, Cys-196, Glu-198, Cys-200, His-204, and Met-207. Glu-198 contributes to the Mg(2+) binding site.

This sequence belongs to the cytochrome c oxidase subunit 2 family. Component of the cytochrome c oxidase (complex IV, CIV), a multisubunit enzyme composed of 14 subunits. The complex is composed of a catalytic core of 3 subunits MT-CO1, MT-CO2 and MT-CO3, encoded in the mitochondrial DNA, and 11 supernumerary subunits COX4I, COX5A, COX5B, COX6A, COX6B, COX6C, COX7A, COX7B, COX7C, COX8 and NDUFA4, which are encoded in the nuclear genome. The complex exists as a monomer or a dimer and forms supercomplexes (SCs) in the inner mitochondrial membrane with NADH-ubiquinone oxidoreductase (complex I, CI) and ubiquinol-cytochrome c oxidoreductase (cytochrome b-c1 complex, complex III, CIII), resulting in different assemblies (supercomplex SCI(1)III(2)IV(1) and megacomplex MCI(2)III(2)IV(2)). Found in a complex with TMEM177, COA6, COX18, COX20, SCO1 and SCO2. Interacts with TMEM177 in a COX20-dependent manner. Interacts with COX20. Interacts with COX16. Cu cation is required as a cofactor.

It is found in the mitochondrion inner membrane. The enzyme catalyses 4 Fe(II)-[cytochrome c] + O2 + 8 H(+)(in) = 4 Fe(III)-[cytochrome c] + 2 H2O + 4 H(+)(out). Its function is as follows. Component of the cytochrome c oxidase, the last enzyme in the mitochondrial electron transport chain which drives oxidative phosphorylation. The respiratory chain contains 3 multisubunit complexes succinate dehydrogenase (complex II, CII), ubiquinol-cytochrome c oxidoreductase (cytochrome b-c1 complex, complex III, CIII) and cytochrome c oxidase (complex IV, CIV), that cooperate to transfer electrons derived from NADH and succinate to molecular oxygen, creating an electrochemical gradient over the inner membrane that drives transmembrane transport and the ATP synthase. Cytochrome c oxidase is the component of the respiratory chain that catalyzes the reduction of oxygen to water. Electrons originating from reduced cytochrome c in the intermembrane space (IMS) are transferred via the dinuclear copper A center (CU(A)) of subunit 2 and heme A of subunit 1 to the active site in subunit 1, a binuclear center (BNC) formed by heme A3 and copper B (CU(B)). The BNC reduces molecular oxygen to 2 water molecules using 4 electrons from cytochrome c in the IMS and 4 protons from the mitochondrial matrix. The sequence is that of Cytochrome c oxidase subunit 2 (MT-CO2) from Hylobates lar (Lar gibbon).